Consider the following 100-residue polypeptide: Integration host factor subunit alpha (100 aa).

The protein belongs to the bacterial histone-like protein family. As to quaternary structure, heterodimer of an alpha and a beta chain.

Its function is as follows. This protein is one of the two subunits of integration host factor, a specific DNA-binding protein that functions in genetic recombination as well as in transcriptional and translational control. This is Integration host factor subunit alpha from Caulobacter vibrioides (strain ATCC 19089 / CIP 103742 / CB 15) (Caulobacter crescentus).